The chain runs to 329 residues: Peroxidase 56 (329 aa).

The signal sequence occupies residues 1-31 (MAALKMTISCFLFLQVIYCLLSSFAPTNVQG). Cystine bridges form between C41/C119, C74/C79, C125/C325, and C204/C236. The active-site Proton acceptor is the H72. The Ca(2+) site is built by D73, V76, G78, E80, and S82. N158 carries an N-linked (GlcNAc...) asparagine glycan. P167 contacts substrate. The N-linked (GlcNAc...) asparagine glycan is linked to N172. Residue H197 participates in heme b binding. T198 lines the Ca(2+) pocket. N213 carries N-linked (GlcNAc...) asparagine glycosylation. D248, S251, and D256 together coordinate Ca(2+).

This sequence belongs to the peroxidase family. Classical plant (class III) peroxidase subfamily. Heme b is required as a cofactor. It depends on Ca(2+) as a cofactor.

The protein localises to the secreted. It catalyses the reaction 2 a phenolic donor + H2O2 = 2 a phenolic radical donor + 2 H2O. In terms of biological role, removal of H(2)O(2), oxidation of toxic reductants, biosynthesis and degradation of lignin, suberization, auxin catabolism, response to environmental stresses such as wounding, pathogen attack and oxidative stress. These functions might be dependent on each isozyme/isoform in each plant tissue. The protein is Peroxidase 56 (PER56) of Arabidopsis thaliana (Mouse-ear cress).